A 473-amino-acid polypeptide reads, in one-letter code: ATP synthase subunit beta (473 aa).

An ATP-binding site is contributed by glycine 153–threonine 160.

The protein belongs to the ATPase alpha/beta chains family. As to quaternary structure, F-type ATPases have 2 components, CF(1) - the catalytic core - and CF(0) - the membrane proton channel. CF(1) has five subunits: alpha(3), beta(3), gamma(1), delta(1), epsilon(1). CF(0) has three main subunits: a(1), b(2) and c(9-12). The alpha and beta chains form an alternating ring which encloses part of the gamma chain. CF(1) is attached to CF(0) by a central stalk formed by the gamma and epsilon chains, while a peripheral stalk is formed by the delta and b chains.

Its subcellular location is the cell inner membrane. It catalyses the reaction ATP + H2O + 4 H(+)(in) = ADP + phosphate + 5 H(+)(out). Produces ATP from ADP in the presence of a proton gradient across the membrane. The catalytic sites are hosted primarily by the beta subunits. The protein is ATP synthase subunit beta of Rickettsia bellii (strain OSU 85-389).